The primary structure comprises 203 residues: Cryptic neisserial protein 1 (203 aa).

Positions 1-18 (MRRAILLILTLTVGTSLA) are cleaved as a signal peptide.

It belongs to the Cnp family.

The protein localises to the periplasm. Its subcellular location is the cytoplasm. This chain is Cryptic neisserial protein 1, found in Neisseria gonorrhoeae (strain ATCC 700825 / FA 1090).